The chain runs to 152 residues: SsrA-binding protein (152 aa).

This sequence belongs to the SmpB family.

It localises to the cytoplasm. Functionally, required for rescue of stalled ribosomes mediated by trans-translation. Binds to transfer-messenger RNA (tmRNA), required for stable association of tmRNA with ribosomes. tmRNA and SmpB together mimic tRNA shape, replacing the anticodon stem-loop with SmpB. tmRNA is encoded by the ssrA gene; the 2 termini fold to resemble tRNA(Ala) and it encodes a 'tag peptide', a short internal open reading frame. During trans-translation Ala-aminoacylated tmRNA acts like a tRNA, entering the A-site of stalled ribosomes, displacing the stalled mRNA. The ribosome then switches to translate the ORF on the tmRNA; the nascent peptide is terminated with the 'tag peptide' encoded by the tmRNA and targeted for degradation. The ribosome is freed to recommence translation, which seems to be the essential function of trans-translation. In Rickettsia canadensis (strain McKiel), this protein is SsrA-binding protein.